Consider the following 435-residue polypeptide: 3-ketoacyl-CoA thiolase (435 aa).

C98 acts as the Acyl-thioester intermediate in catalysis. Residues H391 and C421 each act as proton acceptor in the active site.

The protein belongs to the thiolase-like superfamily. Thiolase family. As to quaternary structure, heterotetramer of two alpha chains (FadJ) and two beta chains (FadI).

The protein localises to the cytoplasm. It carries out the reaction an acyl-CoA + acetyl-CoA = a 3-oxoacyl-CoA + CoA. The protein operates within lipid metabolism; fatty acid beta-oxidation. Functionally, catalyzes the final step of fatty acid oxidation in which acetyl-CoA is released and the CoA ester of a fatty acid two carbons shorter is formed. This is 3-ketoacyl-CoA thiolase from Vibrio parahaemolyticus serotype O3:K6 (strain RIMD 2210633).